The chain runs to 294 residues: Non-selective voltage-gated ion channel VDAC2 (294 aa).

Ala-2 bears the N-acetylalanine mark. Lys-23 and Lys-31 together coordinate ATP. Lys-31 carries the N6-acetyllysine; alternate modification. At Lys-31 the chain carries N6-succinyllysine; alternate. Residue Lys-31 forms a Glycyl lysine isopeptide (Lys-Gly) (interchain with G-Cter in ubiquitin); alternate linkage. Transmembrane regions (beta stranded) follow at residues 37–46 and 50–58; these read LVKLDVKTKS and VEFSTSGSS. A Glycyl lysine isopeptide (Lys-Gly) (interchain with G-Cter in ubiquitin) cross-link involves residue Lys-64. A beta stranded transmembrane segment spans residues 65–75; the sequence is VTGTLETKYKW. Phosphotyrosine is present on Tyr-78. The next 3 beta stranded transmembrane spans lie at 80–87, 91–100, and 106–115; these read LTFTEKWN, TLGTEIAIED, and LKLTFDTTFS. Thr-118 is subject to Phosphothreonine. N6-acetyllysine; alternate is present on Lys-120. Residue Lys-120 forms a Glycyl lysine isopeptide (Lys-Gly) (interchain with G-Cter in ubiquitin); alternate linkage. Lys-121 participates in a covalent cross-link: Glycyl lysine isopeptide (Lys-Gly) (interchain with G-Cter in ubiquitin). Transmembrane regions (beta stranded) follow at residues 122 to 131, 134 to 141, 148 to 156, and 161 to 169; these read SGKIKSSYKR, INLGCDVD, AIHGSAVFG, and LAGYQMTFD. A Glycyl lysine isopeptide (Lys-Gly) (interchain with G-Cter in ubiquitin) cross-link involves residue Lys-172. Beta stranded transmembrane passes span 174–186, 189–196, 200–209, 213–222, 229–238, and 242–249; these read KLTR…GYRT, FQLHTNVN, EFGGSIYQKV, LDTSVNLAWT, RFGIAAKYQL, and ASISAKVN. Phosphoserine is present on Ser-251. Residues 253–255 and 271–275 contribute to the NAD(+) site; these read LIG and SALVD. A run of 2 beta stranded transmembrane segments spans residues 253-262 and 265-274; these read LIGVGYTQTL and GVKLTLSALV. Position 277 is an N6-acetyllysine; alternate (Lys-277). Lys-277 is covalently cross-linked (Glycyl lysine isopeptide (Lys-Gly) (interchain with G-Cter in ubiquitin); alternate). Residues 284–293 form a beta stranded membrane-spanning segment; the sequence is HKLGLALELE.

This sequence belongs to the eukaryotic mitochondrial porin family. As to quaternary structure, monomer, homodimer and higher order oligomers; formation of higher order structures is necessary for scramblase activity. Interacts with ARMC12 in a TBC1D21-dependent manner. Interacts with KLC3. Interacts with SPATA33. Interacts with PPP3CC in a SPATA33-dependent manner. In terms of processing, ubiquitinated by PRKN during mitophagy, leading to its degradation and enhancement of mitophagy. Deubiquitinated by USP30.

The protein resides in the mitochondrion outer membrane. Its subcellular location is the membrane. It catalyses the reaction chloride(in) = chloride(out). The enzyme catalyses K(+)(in) = K(+)(out). The catalysed reaction is a 1,2-diacyl-sn-glycero-3-phospho-L-serine(in) = a 1,2-diacyl-sn-glycero-3-phospho-L-serine(out). It carries out the reaction a 1,2-diacyl-sn-glycero-3-phosphocholine(in) = a 1,2-diacyl-sn-glycero-3-phosphocholine(out). It catalyses the reaction a 1,2-diacyl-sn-glycero-3-phospho-(1D-myo-inositol)(in) = a 1,2-diacyl-sn-glycero-3-phospho-(1D-myo-inositol)(out). Its function is as follows. Non-selective voltage-gated ion channel that mediates the transport of anions and cations through the mitochondrion outer membrane and plasma membrane. The channel adopts an open conformation at zero mV and a closed conformation at both positive and negative potentials. There are two populations of channels; the main that functions in a lower open-state conductance with lower ion selectivity, that switch, in a voltage-dependent manner, from the open to a low-conducting 'closed' state and the other that has a normal ion selectivity in the typical high conductance, 'open' state. Binds various lipids, including the sphingolipid ceramide, the phospholipid phosphatidylcholine, and the sterols cholesterol and oxysterol. Binding of ceramide promotes the mitochondrial outer membrane permeabilization (MOMP) apoptotic pathway. Functionally, catalyzes the scrambling of phospholipids across the outer mitochondrial membrane; the mechanism is unrelated to channel activity and is capable of translocating both anionic and zwitterionic phospholipids. This chain is Non-selective voltage-gated ion channel VDAC2, found in Bos taurus (Bovine).